The primary structure comprises 251 residues: Cytochrome c oxidase subunit 2 (251 aa).

Residues 1-15 (MLNLLYNQIFNVILN) form the signal peptide. Topologically, residues 16-41 (DVPTPYNTYFQDSATPNQEGILELHD) are mitochondrial intermembrane. Residues 42–62 (NIMFYLLVILGLVSWLLFTIT) form a helical membrane-spanning segment. Residues 63-82 (RTYSKNPIAYKYIKHGQTIE) are Mitochondrial matrix-facing. A helical membrane pass occupies residues 83 to 103 (IIWTIFPAVILLIIAFPSFIL). The Mitochondrial intermembrane portion of the chain corresponds to 104-251 (LYLCDEVISP…PAFLEWLNEQ (148 aa)). 6 residues coordinate Cu cation: H186, C221, E223, C225, H229, and M232. Mg(2+) is bound at residue E223.

This sequence belongs to the cytochrome c oxidase subunit 2 family. Component of the cytochrome c oxidase (complex IV, CIV), a multisubunit enzyme composed of a catalytic core of 3 subunits and several supernumerary subunits. The complex exists as a monomer or a dimer and forms supercomplexes (SCs) in the inner mitochondrial membrane with ubiquinol-cytochrome c oxidoreductase (cytochrome b-c1 complex, complex III, CIII). Cu cation is required as a cofactor. In terms of processing, the signal sequence of COX2 is processed by IMP1.

The protein localises to the mitochondrion inner membrane. It catalyses the reaction 4 Fe(II)-[cytochrome c] + O2 + 8 H(+)(in) = 4 Fe(III)-[cytochrome c] + 2 H2O + 4 H(+)(out). Its function is as follows. Component of the cytochrome c oxidase, the last enzyme in the mitochondrial electron transport chain which drives oxidative phosphorylation. The respiratory chain contains 3 multisubunit complexes succinate dehydrogenase (complex II, CII), ubiquinol-cytochrome c oxidoreductase (cytochrome b-c1 complex, complex III, CIII) and cytochrome c oxidase (complex IV, CIV), that cooperate to transfer electrons derived from NADH and succinate to molecular oxygen, creating an electrochemical gradient over the inner membrane that drives transmembrane transport and the ATP synthase. Cytochrome c oxidase is the component of the respiratory chain that catalyzes the reduction of oxygen to water. Electrons originating from reduced cytochrome c in the intermembrane space (IMS) are transferred via the dinuclear copper A center (CU(A)) of subunit 2 and heme A of subunit 1 to the active site in subunit 1, a binuclear center (BNC) formed by heme A3 and copper B (CU(B)). The BNC reduces molecular oxygen to 2 water molecules using 4 electrons from cytochrome c in the IMS and 4 protons from the mitochondrial matrix. This is Cytochrome c oxidase subunit 2 (COX2) from Lachancea thermotolerans (strain ATCC 56472 / CBS 6340 / NRRL Y-8284) (Yeast).